The chain runs to 728 residues: Catalase-peroxidase (728 aa).

The segment at 1-26 is disordered; the sequence is MDNPTDTAGKCPVAHGNKPRGPSNRD. The segment at residues 96 to 218 is a cross-link (tryptophyl-tyrosyl-methioninium (Trp-Tyr) (with M-244)); it reads WHSAGTYRIT…LGAVQMGLIY (123 aa). Catalysis depends on His97, which acts as the Proton acceptor. The tryptophyl-tyrosyl-methioninium (Tyr-Met) (with W-96) cross-link spans 218–244; sequence YVNPEGPGGNPDPLASARDIRETFARM. His259 serves as a coordination point for heme b.

Belongs to the peroxidase family. Peroxidase/catalase subfamily. As to quaternary structure, homodimer or homotetramer. It depends on heme b as a cofactor. Formation of the three residue Trp-Tyr-Met cross-link is important for the catalase, but not the peroxidase activity of the enzyme.

The catalysed reaction is H2O2 + AH2 = A + 2 H2O. The enzyme catalyses 2 H2O2 = O2 + 2 H2O. Its function is as follows. Bifunctional enzyme with both catalase and broad-spectrum peroxidase activity. This chain is Catalase-peroxidase, found in Rhizobium etli (strain CIAT 652).